Here is a 593-residue protein sequence, read N- to C-terminus: Efflux pump FUB11 (593 aa).

Residues 1–45 (MAIDPQPSSPSLSSETIANDTIGNDNNVNEPSVEPKTQEHQHTVP) form a disordered region. The span at 9-30 (SPSLSSETIANDTIGNDNNVNE) shows a compositional bias: polar residues. Residue N19 is glycosylated (N-linked (GlcNAc...) asparagine). Transmembrane regions (helical) follow at residues 98-118 (WAFVLLQSLACLATTFASSAY), 135-155 (VATLGISLYVLGFTFGPLVWA), 167-187 (FFFTFMVATAFSAGAAGAGSI), 195-215 (FLTGSIGSAPLSNAPALIADM), 227-247 (MFSGAPFLGPAIGPIAGGFLG), 254-274 (WLHGLMAAFTGVTWIACTVFI), 337-357 (IYISIIYGTMYMCFAAFPIVF), 367-387 (IGGLAFTGIVIGVILSIISFA), 410-430 (LPPAIMGSLLIPIGLFWFAWT), 438-458 (IVPIIGTVFFAWGLVLVFMAL), 468-488 (IFAASIMAANSALRSLFGAAF), and 503-523 (WASSIPAFLALACVPFPFLFY). The interval 570–593 (THNSHASAAHSHGHRRSLSYTRSA) is disordered.

It belongs to the major facilitator superfamily. DHA1 family. Polyamines/proton antiporter (TC 2.A.1.2.16) subfamily.

It localises to the cell membrane. In terms of biological role, efflux pump involved in export of fusaric acid, a mycotoxin with low to moderate toxicity to animals and humans, but with high phytotoxic properties. Constitutes a self-protecting mechanism of the fungus against critical levels of FSA within the cell. This is Efflux pump FUB11 from Gibberella moniliformis (strain M3125 / FGSC 7600) (Maize ear and stalk rot fungus).